A 307-amino-acid polypeptide reads, in one-letter code: Voltage-dependent anion channel-forming protein sll1024 (307 aa).

4 helical membrane-spanning segments follow: residues 26-46, 54-74, 226-246, and 247-267; these read VIPAIASRVLVCMAFSLGVTL, FSIPIQESIVPSIVLGLLLVF, LIFLYCFITPFQIVNTLHWAT, and AFVVGIIAFTVFGIEEIGVEI.

The protein belongs to the anion channel-forming bestrophin (TC 1.A.46) family.

The protein resides in the cell membrane. This Synechocystis sp. (strain ATCC 27184 / PCC 6803 / Kazusa) protein is Voltage-dependent anion channel-forming protein sll1024.